The chain runs to 313 residues: Biotin synthase (313 aa).

The 231-residue stretch at 28-258 folds into the Radical SAM core domain; that stretch reads NFGNDIELCS…LFPQARLRLS (231 aa). [4Fe-4S] cluster is bound by residues Cys46, Cys50, and Cys53. Positions 90, 121, 181, and 256 each coordinate [2Fe-2S] cluster.

The protein belongs to the radical SAM superfamily. Biotin synthase family. As to quaternary structure, homodimer. It depends on [4Fe-4S] cluster as a cofactor. [2Fe-2S] cluster is required as a cofactor.

The enzyme catalyses (4R,5S)-dethiobiotin + (sulfur carrier)-SH + 2 reduced [2Fe-2S]-[ferredoxin] + 2 S-adenosyl-L-methionine = (sulfur carrier)-H + biotin + 2 5'-deoxyadenosine + 2 L-methionine + 2 oxidized [2Fe-2S]-[ferredoxin]. Its pathway is cofactor biosynthesis; biotin biosynthesis; biotin from 7,8-diaminononanoate: step 2/2. Catalyzes the conversion of dethiobiotin (DTB) to biotin by the insertion of a sulfur atom into dethiobiotin via a radical-based mechanism. In Francisella tularensis subsp. tularensis (strain FSC 198), this protein is Biotin synthase.